The following is a 363-amino-acid chain: Circumsporozoite protein (363 aa).

The first 22 residues, 1–22 (MKNFILLAVSSILLVDLLPTHF), serve as a signal peptide directing secretion. Over residues 48–57 (GAQQVRQSAS) the composition is skewed to polar residues. The tract at residues 48–278 (GAQQVRQSAS…GQNNQGANAP (231 aa)) is disordered. Positions 61–96 (GLGEKPKEGADKEKKKEKGKEKEEEPKKPNENKLKQ) are enriched in basic and acidic residues. The segment at 80–88 (KEKEEEPKK) is required for the binding to heparan sulfate proteoglycans (HSPGs) on the surface of host hepatocytes. Residues 93-97 (KLKQP) are region I; contains the proteolytic cleavage site. The 1; approximate repeat unit spans residues 98–109 (NEGQPQAQGDGA). A 12 X 12 AA approximate tandem repeats of N-A-G-Q-P-Q-A-Q-G-D-G-A region spans residues 98–241 (NEGQPQAQGD…GQPQAQGDGA (144 aa)). 11 consecutive repeat copies span residues 110 to 121 (NAGQPQAQGDGA), 122 to 133 (NAGQPQAQGDGA), 134 to 145 (NAGQPQAQGDGA), 146 to 157 (NAGQPQAQGDGA), 158 to 169 (NAGQPQAQGDGA), 170 to 181 (NAGQPQAQGDGA), 182 to 193 (NAGQPQAQGDGA), 194 to 205 (NAGQPQAQGDGA), 206 to 217 (NAGQPQAQGDGA), 218 to 229 (NAGQPQAQGDGA), and 230 to 241 (NAGQPQAQGDGA). Residues 248 to 259 (RNGGGAPAGGNE) are compositionally biased toward gly residues. The span at 260–277 (GNKQAGKGQGQNNQGANA) shows a compositional bias: low complexity. Positions 289 to 341 (KIRSSVTTEWTPCSVTCGNGVRIRRKAHAGNKKAEDLTMDDLEVEACVMDKCA) constitute a TSP type-1 domain. Intrachain disulfides connect Cys-301–Cys-335 and Cys-305–Cys-340. O-linked (Fuc) threonine glycosylation is present at Thr-304. A lipid anchor (GPI-anchor amidated cysteine) is attached at Cys-340. Positions 341–363 (AGIFNVVSNSLGLVILLVLALFN) are cleaved as a propeptide — removed in mature form.

This sequence belongs to the plasmodium circumsporozoite protein family. Post-translationally, during host cell invasion, proteolytically cleaved at the cell membrane in the region I by a papain-like cysteine protease of parasite origin. Cleavage is triggered by the sporozoite contact with highly sulfated heparan sulfate proteoglycans (HSPGs) present on the host hepatocyte cell surface. Cleavage exposes the TSP type-1 (TSR) domain and is required for productive invasion of host hepatocytes but not for adhesion to the host cell membrane. Cleavage is dispensable for sporozoite development in the oocyst, motility and for traversal of host and vector cells. O-glycosylated; maybe by POFUT2.

It localises to the cell membrane. It is found in the cytoplasm. Its function is as follows. Essential sporozoite protein. In the mosquito vector, required for sporozoite development in the oocyst, migration through the vector hemolymph and entry into the vector salivary glands. In the vertebrate host, required for sporozoite migration through the host dermis and infection of host hepatocytes. Binds to highly sulfated heparan sulfate proteoglycans (HSPGs) on the surface of host hepatocytes. In the vertebrate host, binds to highly sulfated heparan sulfate proteoglycans (HSPGs) on the surface of host hepatocytes and is required for sporozoite invasion of the host hepatocytes. The sequence is that of Circumsporozoite protein from Plasmodium knowlesi (strain H).